The sequence spans 743 residues: Phosphoribosylformylglycinamidine synthase subunit PurL (743 aa).

Residue histidine 54 is part of the active site. Tyrosine 57 and lysine 96 together coordinate ATP. Glutamate 98 is a binding site for Mg(2+). Substrate-binding positions include 99-102 (SHNH) and arginine 121. Histidine 100 (proton acceptor) is an active-site residue. Residue aspartate 122 participates in Mg(2+) binding. Glutamine 245 contacts substrate. Aspartate 273 is a binding site for Mg(2+). Residue 317–319 (ESQ) participates in substrate binding. Positions 500 and 537 each coordinate ATP. Asparagine 538 contacts Mg(2+). Residue serine 540 participates in substrate binding.

This sequence belongs to the FGAMS family. As to quaternary structure, monomer. Part of the FGAM synthase complex composed of 1 PurL, 1 PurQ and 2 PurS subunits.

The protein resides in the cytoplasm. It catalyses the reaction N(2)-formyl-N(1)-(5-phospho-beta-D-ribosyl)glycinamide + L-glutamine + ATP + H2O = 2-formamido-N(1)-(5-O-phospho-beta-D-ribosyl)acetamidine + L-glutamate + ADP + phosphate + H(+). The protein operates within purine metabolism; IMP biosynthesis via de novo pathway; 5-amino-1-(5-phospho-D-ribosyl)imidazole from N(2)-formyl-N(1)-(5-phospho-D-ribosyl)glycinamide: step 1/2. Its function is as follows. Part of the phosphoribosylformylglycinamidine synthase complex involved in the purines biosynthetic pathway. Catalyzes the ATP-dependent conversion of formylglycinamide ribonucleotide (FGAR) and glutamine to yield formylglycinamidine ribonucleotide (FGAM) and glutamate. The FGAM synthase complex is composed of three subunits. PurQ produces an ammonia molecule by converting glutamine to glutamate. PurL transfers the ammonia molecule to FGAR to form FGAM in an ATP-dependent manner. PurS interacts with PurQ and PurL and is thought to assist in the transfer of the ammonia molecule from PurQ to PurL. The chain is Phosphoribosylformylglycinamidine synthase subunit PurL from Bacillus pumilus (strain SAFR-032).